Reading from the N-terminus, the 683-residue chain is Phenoloxidase 3 (683 aa).

A propeptide spanning residues 1–48 (MADKKNLLLLFDHPTEPVFMDKGGNGTVFDVPDSYVTDRYNQMCKKVQ) is cleaved from the precursor. Cu cation is bound by residues His-209, His-213, and His-239. Catalysis depends on Glu-351, which acts as the Proton acceptor. N-linked (GlcNAc...) asparagine glycosylation is present at Asn-358. 3 residues coordinate Cu cation: His-366, His-370, and His-406. N-linked (GlcNAc...) asparagine glycosylation is found at Asn-492 and Asn-546. 2 disulfide bridges follow: Cys-574/Cys-617 and Cys-576/Cys-624.

Belongs to the tyrosinase family. It depends on Cu(2+) as a cofactor. Post-translationally, upon activation, a trypsin type protease cleaves prophenol oxidase to yield the active enzyme.

It is found in the secreted. It catalyses the reaction 2 L-dopa + O2 = 2 L-dopaquinone + 2 H2O. The catalysed reaction is L-tyrosine + O2 = L-dopaquinone + H2O. In terms of biological role, this is a copper-containing oxidase that functions in the formation of pigments such as melanins and other polyphenolic compounds. Catalyzes the rate-limiting conversions of tyrosine to DOPA, DOPA to DOPA-quinone and possibly 5,6 dihydroxyindole to indole-5'6 quinone. The chain is Phenoloxidase 3 (PPO3) from Drosophila melanogaster (Fruit fly).